Here is a 364-residue protein sequence, read N- to C-terminus: tRNA 2-selenouridine synthase (364 aa).

In terms of domain architecture, Rhodanese spans 14-137; the sequence is LIADTPIIDV…LRQTTIQATI (124 aa). Cys-97 functions as the S-selanylcysteine intermediate in the catalytic mechanism.

The protein belongs to the SelU family. Monomer.

The enzyme catalyses 5-methylaminomethyl-2-thiouridine(34) in tRNA + selenophosphate + (2E)-geranyl diphosphate + H2O + H(+) = 5-methylaminomethyl-2-selenouridine(34) in tRNA + (2E)-thiogeraniol + phosphate + diphosphate. The catalysed reaction is 5-methylaminomethyl-2-thiouridine(34) in tRNA + (2E)-geranyl diphosphate = 5-methylaminomethyl-S-(2E)-geranyl-thiouridine(34) in tRNA + diphosphate. It catalyses the reaction 5-methylaminomethyl-S-(2E)-geranyl-thiouridine(34) in tRNA + selenophosphate + H(+) = 5-methylaminomethyl-2-(Se-phospho)selenouridine(34) in tRNA + (2E)-thiogeraniol. It carries out the reaction 5-methylaminomethyl-2-(Se-phospho)selenouridine(34) in tRNA + H2O = 5-methylaminomethyl-2-selenouridine(34) in tRNA + phosphate. Its function is as follows. Involved in the post-transcriptional modification of the uridine at the wobble position (U34) of tRNA(Lys), tRNA(Glu) and tRNA(Gln). Catalyzes the conversion of 2-thiouridine (S2U-RNA) to 2-selenouridine (Se2U-RNA). Acts in a two-step process involving geranylation of 2-thiouridine (S2U) to S-geranyl-2-thiouridine (geS2U) and subsequent selenation of the latter derivative to 2-selenouridine (Se2U) in the tRNA chain. The polypeptide is tRNA 2-selenouridine synthase (Escherichia coli O139:H28 (strain E24377A / ETEC)).